The sequence spans 379 residues: MTHMRKSHPLIKIINHSFIDLPTPSNISAWWNFGSLLGICLGLQIITGLFLAMHYTADTITAFSSVTHICRDVNYGWLIRYLHANGASMFFILLYLHIGRGIYYGSYTFMETWNIGILLLFAVMATAFMGYVLPWGQMSSWGATVITNLLSAIPYIGTTLVEWIWGGFSVDKATLTRFFAFHFILPFIIPALVMIHFFFLHETGSNNPSGLNSDSDKIPFHPYYTIKDIMGLLIMMLALMSLVLFSPDLLGDPDNYTPANPLNTPPHIKPEWYFLFAYAILRSIPNKLGGVLALVLSILVLALFPMLHLSKQRSMTFRPFSQCLLWMLTANLFILTWIGGQPVEYPYITIGQLASINYFFTILIVSRLVSLMENKVLKW.

Helical transmembrane passes span 33–53 (FGSL…FLAM), 77–98 (WLIR…YLHI), 113–133 (WNIG…GYVL), and 178–198 (FFAF…IHFF). Residues His-83 and His-97 each coordinate heme b. His-182 and His-196 together coordinate heme b. An a ubiquinone-binding site is contributed by His-201. A run of 4 helical transmembrane segments spans residues 226-246 (IKDI…VLFS), 288-308 (LGGV…PMLH), 320-340 (FSQC…WIGG), and 347-367 (YITI…IVSR).

The protein belongs to the cytochrome b family. The cytochrome bc1 complex contains 11 subunits: 3 respiratory subunits (MT-CYB, CYC1 and UQCRFS1), 2 core proteins (UQCRC1 and UQCRC2) and 6 low-molecular weight proteins (UQCRH/QCR6, UQCRB/QCR7, UQCRQ/QCR8, UQCR10/QCR9, UQCR11/QCR10 and a cleavage product of UQCRFS1). This cytochrome bc1 complex then forms a dimer. Requires heme b as cofactor.

The protein resides in the mitochondrion inner membrane. Component of the ubiquinol-cytochrome c reductase complex (complex III or cytochrome b-c1 complex) that is part of the mitochondrial respiratory chain. The b-c1 complex mediates electron transfer from ubiquinol to cytochrome c. Contributes to the generation of a proton gradient across the mitochondrial membrane that is then used for ATP synthesis. The protein is Cytochrome b (MT-CYB) of Dolichotis patagonum (Patagonian mara).